Reading from the N-terminus, the 335-residue chain is MNFKKLPKIELHCHLDGSLRIDTILDIAKKDNIPLPSYNKKELINYVSIMDDCNSLDEYLNKFFIPNKVMQTKENLKRIAFELLEDVAADNVKYIEVRFAPLLHVEKGLNIEEIIESVLAGIKEAEKLYDIKGNLILGCMRNMDIPSAFEVVKKGAKFIGKGVVAIDLCAGEEPHFPGKYIEVLKLAKECGYRITIHAGEAGVGENVLEAINLLNAERIGHGIYIKNCAEAYKLVKEKNIPLEVCPTSNLHTKAFESYETHPFMDFLKDGIKVTINTDNMTVSNTTITKELEMLNKFCGLSIEDYKILYLNAVEASFASPETKEILKSYANEITA.

2 residues coordinate Zn(2+): H12 and H14. Substrate contacts are provided by H14 and D16. H197 serves as a coordination point for Zn(2+). Residue E200 is the Proton donor of the active site. Residue D278 participates in Zn(2+) binding.

Belongs to the metallo-dependent hydrolases superfamily. Adenosine and AMP deaminases family. Adenosine deaminase subfamily. Requires Zn(2+) as cofactor.

The catalysed reaction is adenosine + H2O + H(+) = inosine + NH4(+). It carries out the reaction 2'-deoxyadenosine + H2O + H(+) = 2'-deoxyinosine + NH4(+). Catalyzes the hydrolytic deamination of adenosine and 2-deoxyadenosine. This chain is Adenosine deaminase, found in Clostridium botulinum (strain ATCC 19397 / Type A).